Here is a 363-residue protein sequence, read N- to C-terminus: Phosphoserine aminotransferase (363 aa).

Arg42 contacts L-glutamate. Residues 76–77, Trp102, Thr156, Asp175, and Gln198 contribute to the pyridoxal 5'-phosphate site; that span reads GR. Lys199 bears the N6-(pyridoxal phosphate)lysine mark. 240-241 contributes to the pyridoxal 5'-phosphate binding site; the sequence is NT.

The protein belongs to the class-V pyridoxal-phosphate-dependent aminotransferase family. SerC subfamily. Homodimer. The cofactor is pyridoxal 5'-phosphate.

The protein resides in the cytoplasm. It carries out the reaction O-phospho-L-serine + 2-oxoglutarate = 3-phosphooxypyruvate + L-glutamate. The enzyme catalyses 4-(phosphooxy)-L-threonine + 2-oxoglutarate = (R)-3-hydroxy-2-oxo-4-phosphooxybutanoate + L-glutamate. The protein operates within amino-acid biosynthesis; L-serine biosynthesis; L-serine from 3-phospho-D-glycerate: step 2/3. It participates in cofactor biosynthesis; pyridoxine 5'-phosphate biosynthesis; pyridoxine 5'-phosphate from D-erythrose 4-phosphate: step 3/5. Catalyzes the reversible conversion of 3-phosphohydroxypyruvate to phosphoserine and of 3-hydroxy-2-oxo-4-phosphonooxybutanoate to phosphohydroxythreonine. This is Phosphoserine aminotransferase from Shewanella halifaxensis (strain HAW-EB4).